Consider the following 276-residue polypeptide: Omega-amidase NIT2-A (276 aa).

Residues 4–248 (FKLSLVQFLV…ETVLSAEIDL (245 aa)) enclose the CN hydrolase domain. Glutamate 43 serves as the catalytic Proton acceptor. Lysine 112 serves as the catalytic Proton donor. Cysteine 153 serves as the catalytic Nucleophile.

Belongs to the carbon-nitrogen hydrolase superfamily. NIT1/NIT2 family. As to quaternary structure, homodimer.

It localises to the cytoplasm. The enzyme catalyses 2-oxoglutaramate + H2O = 2-oxoglutarate + NH4(+). The catalysed reaction is 2-oxosuccinamate + H2O = oxaloacetate + NH4(+). Its function is as follows. Has omega-amidase activity. The role of omega-amidase is to remove potentially toxic intermediates by converting 2-oxoglutaramate and 2-oxosuccinamate to biologically useful 2-oxoglutarate and oxaloacetate, respectively. In Xenopus laevis (African clawed frog), this protein is Omega-amidase NIT2-A (nit2a).